The following is a 190-amino-acid chain: Potassium-transporting ATPase KdpC subunit (190 aa).

Residues Thr-10–Gly-30 traverse the membrane as a helical segment.

The protein belongs to the KdpC family. The system is composed of three essential subunits: KdpA, KdpB and KdpC.

Its subcellular location is the cell inner membrane. Its function is as follows. Part of the high-affinity ATP-driven potassium transport (or Kdp) system, which catalyzes the hydrolysis of ATP coupled with the electrogenic transport of potassium into the cytoplasm. This subunit acts as a catalytic chaperone that increases the ATP-binding affinity of the ATP-hydrolyzing subunit KdpB by the formation of a transient KdpB/KdpC/ATP ternary complex. This chain is Potassium-transporting ATPase KdpC subunit, found in Escherichia coli (strain SE11).